A 1941-amino-acid chain; its full sequence is Myosin-7B (1941 aa).

Residues 30–80 (DGKKRVWVPDEQDAYVEAEVKTEATGGKVTVETKDQKVLTVRETEMQPMNP) enclose the Myosin N-terminal SH3-like domain. A Myosin motor domain is found at 84-785 (DLLEDMAMMT…LLGILEELRD (702 aa)). 177 to 184 (GESGAGKT) serves as a coordination point for ATP. Actin-binding stretches follow at residues 662 to 684 (LNKLMTNLRATQPHFVRCIVPNE) and 764 to 778 (QFGHTKVFFKAGLLG). Residues 788-817 (LAKVLTLLQARSRGRLMRLEYQRMLGGRDA) form the IQ domain. Residues 846-1935 (LLRSAQAEEE…KLRARSRDAL (1090 aa)) are a coiled coil. Residues 1887–1941 (RQFEEAEQQASTNLAKYRKAQHELDDAEERADMAETQANKLRARSRDALGPKHKE) form a disordered region. Basic and acidic residues predominate over residues 1930–1941 (RSRDALGPKHKE).

Belongs to the TRAFAC class myosin-kinesin ATPase superfamily. Myosin family. In terms of assembly, muscle myosin is a hexameric protein that consists of 2 heavy chain subunits (MHC), 2 alkali light chain subunits (MLC) and 2 regulatory light chain subunits (MLC-2).

The protein resides in the membrane. Functionally, involved in muscle contraction. The protein is Myosin-7B (Myh7b) of Mus musculus (Mouse).